Here is a 486-residue protein sequence, read N- to C-terminus: Ribosomal RNA small subunit methyltransferase F (486 aa).

S-adenosyl-L-methionine contacts are provided by residues 124-130 (ASAPGSK), E148, D175, and D193. C246 (nucleophile) is an active-site residue.

It belongs to the class I-like SAM-binding methyltransferase superfamily. RsmB/NOP family.

The protein localises to the cytoplasm. It carries out the reaction cytidine(1407) in 16S rRNA + S-adenosyl-L-methionine = 5-methylcytidine(1407) in 16S rRNA + S-adenosyl-L-homocysteine + H(+). Its function is as follows. Specifically methylates the cytosine at position 1407 (m5C1407) of 16S rRNA. The protein is Ribosomal RNA small subunit methyltransferase F of Shewanella baltica (strain OS185).